We begin with the raw amino-acid sequence, 347 residues long: MNPLILSMIMATIILGTLIVMTSSHWLMVWIGFEMNMLAILPVLMKKYNPRSMEAATKYFLTQATASMLLMLAITINLIYSGQWSTANPLNPTTSIIMTLALAMKLGLSPFHFWVPEVTQGIQLSSGLILLTWQKLAPMSILYQISPAINMDLLLSMSLMSVAIGGWGGLNQTQLRKIMAYSSIAHMGWMTAVMTYNPTMALLNLIIYILLTTTTFMTFMLNSTTTTLSLSHTWNKTPLLTTTILILMLSLGGLPPLSGFLPKWMIIQELTKNDSIITPTIMAITALLNLYFYMRLTYSTSLTMFPSVNNMKMKWQFNSMKQTTHLPPLIVLSTLILPMSPMLMLLE.

A run of 10 helical transmembrane segments spans residues 4–21, 26–45, 59–79, 96–116, 122–142, 148–168, 201–221, 242–262, 274–294, and 326–346; these read LILS…LIVM, WLMV…PVLM, YFLT…INLI, IIMT…FWVP, IQLS…MSIL, AINM…GGWG, ALLN…TFML, TTIL…GFLP, DSII…YFYM, and LPPL…LMLL.

Belongs to the complex I subunit 2 family. As to quaternary structure, core subunit of respiratory chain NADH dehydrogenase (Complex I) which is composed of 45 different subunits. Interacts with TMEM242.

The protein resides in the mitochondrion inner membrane. It catalyses the reaction a ubiquinone + NADH + 5 H(+)(in) = a ubiquinol + NAD(+) + 4 H(+)(out). Core subunit of the mitochondrial membrane respiratory chain NADH dehydrogenase (Complex I) which catalyzes electron transfer from NADH through the respiratory chain, using ubiquinone as an electron acceptor. Essential for the catalytic activity and assembly of complex I. The polypeptide is NADH-ubiquinone oxidoreductase chain 2 (Syconycteris australis (Southern blossom bat)).